A 663-amino-acid polypeptide reads, in one-letter code: UvrABC system protein B (663 aa).

One can recognise a Helicase ATP-binding domain in the interval 31-188 (DNIEGGEKAQ…NDLVDIQFER (158 aa)). 44–51 (GATGTGKT) provides a ligand contact to ATP. The Beta-hairpin signature appears at 97 to 120 (YYDYYQPEAYVPSSDTYIEKDSSV). The 167-residue stretch at 435-601 (QMDDLLGEIN…TIKKDIRDLI (167 aa)) folds into the Helicase C-terminal domain. The 36-residue stretch at 627 to 662 (QEAIKKLQKQMQEAAELLDFELAAQIRDMVLELKAM) folds into the UVR domain.

It belongs to the UvrB family. In terms of assembly, forms a heterotetramer with UvrA during the search for lesions. Interacts with UvrC in an incision complex.

Its subcellular location is the cytoplasm. The UvrABC repair system catalyzes the recognition and processing of DNA lesions. A damage recognition complex composed of 2 UvrA and 2 UvrB subunits scans DNA for abnormalities. Upon binding of the UvrA(2)B(2) complex to a putative damaged site, the DNA wraps around one UvrB monomer. DNA wrap is dependent on ATP binding by UvrB and probably causes local melting of the DNA helix, facilitating insertion of UvrB beta-hairpin between the DNA strands. Then UvrB probes one DNA strand for the presence of a lesion. If a lesion is found the UvrA subunits dissociate and the UvrB-DNA preincision complex is formed. This complex is subsequently bound by UvrC and the second UvrB is released. If no lesion is found, the DNA wraps around the other UvrB subunit that will check the other stand for damage. The polypeptide is UvrABC system protein B (Streptococcus mutans serotype c (strain ATCC 700610 / UA159)).